A 118-amino-acid polypeptide reads, in one-letter code: UPF0342 protein ABC1519 (118 aa).

It belongs to the UPF0342 family.

This chain is UPF0342 protein ABC1519, found in Shouchella clausii (strain KSM-K16) (Alkalihalobacillus clausii).